The chain runs to 87 residues: MARSLKKGPFVDHHLQKKVDVQNKEGTKKPIKTWSRRSMITPDMVGHTFEVHNGRKHLTVFVTDNMVGHRLGEFSPTRTFKGHPIKK.

The interval methionine 1–lysine 29 is disordered. Residues proline 9–lysine 28 show a composition bias toward basic and acidic residues.

It belongs to the universal ribosomal protein uS19 family.

Its function is as follows. Protein S19 forms a complex with S13 that binds strongly to the 16S ribosomal RNA. The protein is Small ribosomal subunit protein uS19 of Protochlamydia amoebophila (strain UWE25).